Reading from the N-terminus, the 173-residue chain is Dual-action ribosomal maturation protein DarP (173 aa).

It belongs to the DarP family.

The protein resides in the cytoplasm. In terms of biological role, member of a network of 50S ribosomal subunit biogenesis factors which assembles along the 30S-50S interface, preventing incorrect 23S rRNA structures from forming. Promotes peptidyl transferase center (PTC) maturation. This chain is Dual-action ribosomal maturation protein DarP, found in Pseudomonas putida (strain GB-1).